The chain runs to 189 residues: Glucose-6-phosphate isomerase (189 aa).

Fe cation contacts are provided by His-88, His-90, Glu-97, and His-136.

This sequence belongs to the archaeal-type GPI family. In terms of assembly, homodimer.

Its subcellular location is the cytoplasm. The catalysed reaction is alpha-D-glucose 6-phosphate = beta-D-fructose 6-phosphate. The protein operates within carbohydrate degradation; glycolysis; D-glyceraldehyde 3-phosphate and glycerone phosphate from D-glucose: step 2/4. In Thermococcus onnurineus (strain NA1), this protein is Glucose-6-phosphate isomerase.